The chain runs to 244 residues: 1-(5-phosphoribosyl)-5-[(5-phosphoribosylamino)methylideneamino] imidazole-4-carboxamide isomerase (244 aa).

The active-site Proton acceptor is the aspartate 8. Aspartate 129 functions as the Proton donor in the catalytic mechanism.

The protein belongs to the HisA/HisF family.

Its subcellular location is the cytoplasm. The enzyme catalyses 1-(5-phospho-beta-D-ribosyl)-5-[(5-phospho-beta-D-ribosylamino)methylideneamino]imidazole-4-carboxamide = 5-[(5-phospho-1-deoxy-D-ribulos-1-ylimino)methylamino]-1-(5-phospho-beta-D-ribosyl)imidazole-4-carboxamide. It participates in amino-acid biosynthesis; L-histidine biosynthesis; L-histidine from 5-phospho-alpha-D-ribose 1-diphosphate: step 4/9. This chain is 1-(5-phosphoribosyl)-5-[(5-phosphoribosylamino)methylideneamino] imidazole-4-carboxamide isomerase, found in Allorhizobium ampelinum (strain ATCC BAA-846 / DSM 112012 / S4) (Agrobacterium vitis (strain S4)).